The following is a 156-amino-acid chain: ATP synthase subunit b (156 aa).

Residues leucine 7–leucine 29 traverse the membrane as a helical segment.

This sequence belongs to the ATPase B chain family. As to quaternary structure, F-type ATPases have 2 components, F(1) - the catalytic core - and F(0) - the membrane proton channel. F(1) has five subunits: alpha(3), beta(3), gamma(1), delta(1), epsilon(1). F(0) has three main subunits: a(1), b(2) and c(10-14). The alpha and beta chains form an alternating ring which encloses part of the gamma chain. F(1) is attached to F(0) by a central stalk formed by the gamma and epsilon chains, while a peripheral stalk is formed by the delta and b chains.

It is found in the cell inner membrane. In terms of biological role, f(1)F(0) ATP synthase produces ATP from ADP in the presence of a proton or sodium gradient. F-type ATPases consist of two structural domains, F(1) containing the extramembraneous catalytic core and F(0) containing the membrane proton channel, linked together by a central stalk and a peripheral stalk. During catalysis, ATP synthesis in the catalytic domain of F(1) is coupled via a rotary mechanism of the central stalk subunits to proton translocation. Component of the F(0) channel, it forms part of the peripheral stalk, linking F(1) to F(0). The sequence is that of ATP synthase subunit b from Burkholderia ambifaria (strain MC40-6).